The following is a 265-amino-acid chain: Undecaprenyl-diphosphatase 1 (265 aa).

The next 7 helical transmembrane spans lie at 4 to 24 (IITA…PISS), 42 to 62 (AKTF…ILYH), 84 to 104 (FHVF…HDVI), 108 to 128 (LFQP…MIFA), 184 to 204 (SEFS…LDLL), 217 to 237 (MFAV…VTFL), and 245 to 265 (LKPF…FVLL).

Belongs to the UppP family.

The protein resides in the cell membrane. The enzyme catalyses di-trans,octa-cis-undecaprenyl diphosphate + H2O = di-trans,octa-cis-undecaprenyl phosphate + phosphate + H(+). Catalyzes the dephosphorylation of undecaprenyl diphosphate (UPP). Confers resistance to bacitracin. This chain is Undecaprenyl-diphosphatase 1, found in Bacillus anthracis.